The following is a 166-amino-acid chain: Large ribosomal subunit protein uL10 (166 aa).

Belongs to the universal ribosomal protein uL10 family. As to quaternary structure, part of the ribosomal stalk of the 50S ribosomal subunit. The N-terminus interacts with L11 and the large rRNA to form the base of the stalk. The C-terminus forms an elongated spine to which L12 dimers bind in a sequential fashion forming a multimeric L10(L12)X complex.

Functionally, forms part of the ribosomal stalk, playing a central role in the interaction of the ribosome with GTP-bound translation factors. The chain is Large ribosomal subunit protein uL10 from Bacillus cereus (strain G9842).